Reading from the N-terminus, the 273-residue chain is Formamidopyrimidine-DNA glycosylase (273 aa).

The active-site Schiff-base intermediate with DNA is P2. The Proton donor role is filled by E3. K58 functions as the Proton donor; for beta-elimination activity in the catalytic mechanism. 2 residues coordinate DNA: H91 and R110. The FPG-type zinc-finger motif lies at 238–272; the sequence is QVYGKTDQPCARCATPIEKIKVGGRGTHFCPSCQK. Catalysis depends on R262, which acts as the Proton donor; for delta-elimination activity.

The protein belongs to the FPG family. In terms of assembly, monomer. It depends on Zn(2+) as a cofactor.

It catalyses the reaction Hydrolysis of DNA containing ring-opened 7-methylguanine residues, releasing 2,6-diamino-4-hydroxy-5-(N-methyl)formamidopyrimidine.. The catalysed reaction is 2'-deoxyribonucleotide-(2'-deoxyribose 5'-phosphate)-2'-deoxyribonucleotide-DNA = a 3'-end 2'-deoxyribonucleotide-(2,3-dehydro-2,3-deoxyribose 5'-phosphate)-DNA + a 5'-end 5'-phospho-2'-deoxyribonucleoside-DNA + H(+). In terms of biological role, involved in base excision repair of DNA damaged by oxidation or by mutagenic agents. Acts as a DNA glycosylase that recognizes and removes damaged bases. Has a preference for oxidized purines, such as 7,8-dihydro-8-oxoguanine (8-oxoG). Has AP (apurinic/apyrimidinic) lyase activity and introduces nicks in the DNA strand. Cleaves the DNA backbone by beta-delta elimination to generate a single-strand break at the site of the removed base with both 3'- and 5'-phosphates. The polypeptide is Formamidopyrimidine-DNA glycosylase (mutM) (Streptococcus mutans serotype c (strain ATCC 700610 / UA159)).